Here is a 398-residue protein sequence, read N- to C-terminus: Phosphoglycerate kinase (398 aa).

Residues 21–23 (DFN), Arg-36, 59–62 (HLGR), Arg-119, and Arg-157 contribute to the substrate site. Residues Lys-208, Gly-296, Glu-327, and 354–357 (GGDS) each bind ATP.

The protein belongs to the phosphoglycerate kinase family. In terms of assembly, monomer.

Its subcellular location is the cytoplasm. It catalyses the reaction (2R)-3-phosphoglycerate + ATP = (2R)-3-phospho-glyceroyl phosphate + ADP. It functions in the pathway carbohydrate degradation; glycolysis; pyruvate from D-glyceraldehyde 3-phosphate: step 2/5. In Lactococcus lactis subsp. cremoris (strain SK11), this protein is Phosphoglycerate kinase.